A 542-amino-acid polypeptide reads, in one-letter code: Chaperonin GroEL 1 (542 aa).

Residues 29-32, 86-90, Gly-413, 477-479, and Asp-493 each bind ATP; these read TLGP, DGTTT, and NAA.

The protein belongs to the chaperonin (HSP60) family. As to quaternary structure, forms a cylinder of 14 subunits composed of two heptameric rings stacked back-to-back. Interacts with the co-chaperonin GroES.

The protein resides in the cytoplasm. The catalysed reaction is ATP + H2O + a folded polypeptide = ADP + phosphate + an unfolded polypeptide.. Functionally, together with its co-chaperonin GroES, plays an essential role in assisting protein folding. The GroEL-GroES system forms a nano-cage that allows encapsulation of the non-native substrate proteins and provides a physical environment optimized to promote and accelerate protein folding. The protein is Chaperonin GroEL 1 of Kineococcus radiotolerans (strain ATCC BAA-149 / DSM 14245 / SRS30216).